A 336-amino-acid polypeptide reads, in one-letter code: Plant-specific TFIIB-related protein 2 (336 aa).

The segment at 2-34 adopts a TFIIB-type zinc-finger fold; sequence EEETCLDCKRPTIMVVDHSSGDTICSECGLVLE. Residues C6, C9, C26, and C29 each coordinate Zn(2+).

In terms of tissue distribution, specifically expressed in reproductive organs and seeds.

It localises to the nucleus. Its function is as follows. Plant-specific TFIIB-related protein involved in the regulation of endosperm proliferation during the syncytial phase of endosperm development. Does not contribute to RNA polymerase IV or V activities in reproductive tissues. The polypeptide is Plant-specific TFIIB-related protein 2 (Arabidopsis thaliana (Mouse-ear cress)).